The chain runs to 619 residues: Translation initiation factor IF-2 (619 aa).

In terms of domain architecture, tr-type G spans 120–289 (PRPPIVTIMG…ILLLGEVEGY (170 aa)). The segment at 129–136 (GHVDHGKT) is G1. 129 to 136 (GHVDHGKT) contributes to the GTP binding site. The tract at residues 154–158 (GITQK) is G2. The segment at 176–179 (DTPG) is G3. GTP-binding positions include 176–180 (DTPGH) and 230–233 (NKMD). The tract at residues 230 to 233 (NKMD) is G4. Positions 266–268 (SAL) are G5.

Belongs to the TRAFAC class translation factor GTPase superfamily. Classic translation factor GTPase family. IF-2 subfamily.

It localises to the cytoplasm. Functionally, one of the essential components for the initiation of protein synthesis. Protects formylmethionyl-tRNA from spontaneous hydrolysis and promotes its binding to the 30S ribosomal subunits. Also involved in the hydrolysis of GTP during the formation of the 70S ribosomal complex. This Mycoplasma genitalium (strain ATCC 33530 / DSM 19775 / NCTC 10195 / G37) (Mycoplasmoides genitalium) protein is Translation initiation factor IF-2 (infB).